A 142-amino-acid chain; its full sequence is Small ribosomal subunit protein bS6 (142 aa).

Residues 110–133 (NKKPSHAKEKHEKTEHTHSHHTEE) are compositionally biased toward basic and acidic residues. The segment at 110 to 142 (NKKPSHAKEKHEKTEHTHSHHTEETESVGSHSK) is disordered.

It belongs to the bacterial ribosomal protein bS6 family.

Its function is as follows. Binds together with bS18 to 16S ribosomal RNA. The sequence is that of Small ribosomal subunit protein bS6 from Helicobacter pylori (strain Shi470).